A 192-amino-acid chain; its full sequence is Large ribosomal subunit protein uL5 (192 aa).

It belongs to the universal ribosomal protein uL5 family. Part of the 50S ribosomal subunit; contacts the 5S rRNA and probably tRNA. Forms a bridge to the 30S subunit in the 70S ribosome.

Functionally, this is one of the proteins that bind and probably mediate the attachment of the 5S RNA into the large ribosomal subunit, where it forms part of the central protuberance. In the 70S ribosome it contacts protein S13 of the 30S subunit (bridge B1b), connecting the 2 subunits; this bridge is implicated in subunit movement. May contact the P site tRNA; the 5S rRNA and some of its associated proteins might help stabilize positioning of ribosome-bound tRNAs. The protein is Large ribosomal subunit protein uL5 of Aeropyrum pernix (strain ATCC 700893 / DSM 11879 / JCM 9820 / NBRC 100138 / K1).